Here is a 521-residue protein sequence, read N- to C-terminus: Chromaffin granule amine transporter (521 aa).

Topologically, residues 1–21 are cytoplasmic; the sequence is MLQVVLGAPQRLLKEGRQSRK. Residues 22–42 form a helical membrane-spanning segment; it reads LVLVVVFVALLLDNMLLTVVV. Topologically, residues 43-135 are lumenal, vesicle; sequence PIVPTFLYAT…IEFLEEENVR (93 aa). Asn58, Asn87, and Asn104 each carry an N-linked (GlcNAc...) asparagine glycan. The chain crosses the membrane as a helical span at residues 136–155; the sequence is IGILFASKALMQLLVNPFVG. The Cytoplasmic portion of the chain corresponds to 156 to 164; it reads PLTNRIGYH. The helical transmembrane segment at 165–185 threads the bilayer; it reads IPMFVGFMIMFLSTLMFAFSG. Residues 186-194 are Lumenal, vesicle-facing; sequence TYALLFVAR. The chain crosses the membrane as a helical span at residues 195-215; the sequence is TLQGIGSSFSSVAGLGMLASV. Residues 216–224 lie on the Cytoplasmic side of the membrane; it reads YTDNYERGR. A helical membrane pass occupies residues 225 to 247; it reads AMGIALGGLALGLLVGAPFGSVM. Over 248–253 the chain is Lumenal, vesicle; it reads YEFVGK. Residues 254–276 form a helical membrane-spanning segment; the sequence is SSPFLILAFLALLDGALQLCILW. The Cytoplasmic portion of the chain corresponds to 277–296; sequence PSKVSPESAMGTSLLTLLKD. The chain crosses the membrane as a helical span at residues 297–316; it reads PYILVAAGSICLANMGVAIL. At 317–332 the chain is on the lumenal, vesicle side; it reads EPTLPIWMMQTMCSPE. The chain crosses the membrane as a helical span at residues 333–357; it reads WQLGLAFLPASVAYLIGTNLFGVLA. Over 358–362 the chain is Cytoplasmic; it reads NKMGR. A helical transmembrane segment spans residues 363–383; sequence WLCSLVGMVAVGISLLCVPLA. The Lumenal, vesicle segment spans residues 384–394; it reads HNIFGLIGPNA. Residues 395-415 form a helical membrane-spanning segment; that stretch reads GLGFAIGMVDSSLMPIMGYLV. Topologically, residues 416–419 are cytoplasmic; it reads DLRH. Residues 420 to 440 traverse the membrane as a helical segment; sequence TSVYGSVYAIADVAFCVGFAI. Over 441-445 the chain is Lumenal, vesicle; sequence GPSTG. A helical transmembrane segment spans residues 446–467; it reads GVIVQVIGFPWLMVIIGTINII. Residues 468–521 lie on the Cytoplasmic side of the membrane; that stretch reads YAPLCCFLQNPPAKEEKRAILSQECPTETQMYTFQKPTKAFPLGENSDDPSSGE.

Belongs to the major facilitator superfamily. Vesicular transporter family. Adrenal gland.

Its subcellular location is the cytoplasmic vesicle. It is found in the secretory vesicle membrane. It localises to the secretory vesicle. The protein localises to the synaptic vesicle membrane. The enzyme catalyses serotonin(in) + 2 H(+)(out) = serotonin(out) + 2 H(+)(in). The catalysed reaction is (R)-noradrenaline(in) + 2 H(+)(out) = (R)-noradrenaline(out) + 2 H(+)(in). It carries out the reaction dopamine(in) + 2 H(+)(out) = dopamine(out) + 2 H(+)(in). Its activity is regulated as follows. Strongly inhibited by reserpine, ketanserin and methamphetamine. Also inhibited weakly by tetrabenazine. Functionally, electrogenic antiporter that exchanges one cationic monoamine with two intravesicular protons across the membrane of secretory and synaptic vesicles. Uses the electrochemical proton gradient established by the V-type proton-pump ATPase to accumulate high concentrations of monoamines inside the vesicles prior to their release via exocytosis. Transports catecholamines and indolamines with higher affinity for serotonin. Regulates the transvesicular monoaminergic gradient that determines the quantal size. Mediates presynaptic monoaminergic vesicle transport in the amygdala and prefrontal brain regions related with emotion processing in response to environmental stimuli. This chain is Chromaffin granule amine transporter (Slc18a1), found in Rattus norvegicus (Rat).